The following is a 389-amino-acid chain: Rhizopuspepsin-1 (389 aa).

The N-terminal stretch at 1–21 (MKFTLISSCVALAAMTLAVEA) is a signal peptide. Positions 22–66 (APNGKKINIPLAKNNSYKPSAKNALNKALAKYNRRKVGSGGITTE) are cleaved as a propeptide — activation peptide. Residues 82 to 385 (YYGEVTVGTP…NQEVPEVQIA (304 aa)) form the Peptidase A1 domain. Aspartate 100 is a catalytic residue. A disulfide bridge connects residues cysteine 113 and cysteine 116. Residue aspartate 283 is part of the active site. A disulfide bond links cysteine 317 and cysteine 350.

It belongs to the peptidase A1 family.

It carries out the reaction Hydrolysis of proteins with broad specificity similar to that of pepsin A, preferring hydrophobic residues at P1 and P1'. Clots milk and activates trypsinogen. Does not cleave 4-Gln-|-His-5, but does cleave 10-His-|-Leu-11 and 12-Val-|-Glu-13 in B chain of insulin.. The protein is Rhizopuspepsin-1 (RNAP) of Rhizopus niveus.